A 696-amino-acid polypeptide reads, in one-letter code: Elongation factor G 2 (696 aa).

The tr-type G domain maps to 5-281 (SKYRNIGIFA…AVVDYLPSPT (277 aa)). Residues 14 to 21 (AHVDAGKT), 78 to 82 (DTPGH), and 132 to 135 (NKLD) contribute to the GTP site.

This sequence belongs to the TRAFAC class translation factor GTPase superfamily. Classic translation factor GTPase family. EF-G/EF-2 subfamily.

The protein localises to the cytoplasm. Catalyzes the GTP-dependent ribosomal translocation step during translation elongation. During this step, the ribosome changes from the pre-translocational (PRE) to the post-translocational (POST) state as the newly formed A-site-bound peptidyl-tRNA and P-site-bound deacylated tRNA move to the P and E sites, respectively. Catalyzes the coordinated movement of the two tRNA molecules, the mRNA and conformational changes in the ribosome. This Vibrio parahaemolyticus serotype O3:K6 (strain RIMD 2210633) protein is Elongation factor G 2.